Reading from the N-terminus, the 744-residue chain is Prestin (744 aa).

The Cytoplasmic segment spans residues 1-75 (MDHAEENEIP…PITKWLPAYK (75 aa)). Residues 76–105 (FKEYVLGDLVSGISTGVLQLPQGLAFAMLA) traverse the membrane as a helical segment. Over 106–108 (AVP) the chain is Extracellular. A helical transmembrane segment spans residues 109–126 (PVFGLYSSFYPVIMYCFF). Residues 127–137 (GTSRHISIGPF) lie on the Cytoplasmic side of the membrane. The chain crosses the membrane as a helical span at residues 138–151 (AVISLMIGGVAVRL). Residues 152 to 168 (VPDDIVIPGGVNATNGT) are Extracellular-facing. The short motif at 158–168 (IPGGVNATNGT) is the Involved in motor function element. N-linked (GlcNAc...) asparagine glycans are attached at residues Asn163 and Asn166. Residues 169–196 (EARDALRVKVAMSVTLLSGIIQFCLGVC) form a helical membrane-spanning segment. At 197 to 206 (RFGFVAIYLT) the chain is on the cytoplasmic side. The chain crosses the membrane as a helical span at residues 207 to 230 (EPLVRGFTTAAAVHVFTSMLKYLF). Topologically, residues 231 to 241 (GVKTKRYSGIF) are extracellular. Residues 242–253 (SVVYSTVAVLQN) constitute an intramembrane region (helical). Over 254–258 (VKNLN) the chain is Extracellular. Residues 259 to 282 (VCSLGVGLMVFGLLLGGKEFNERF) form a helical membrane-spanning segment. Over 283 to 291 (KEKLPAPIP) the chain is Cytoplasmic. Residues 292 to 307 (LEFFAVVMGTGISAGF) traverse the membrane as a helical segment. The Extracellular segment spans residues 308 to 332 (NLHESYSVDVVGTLPLGLLPPANPD). Residues 333–367 (TSLFHLVYVDAIAIAIVGFSVTISMAKTLANKHGY) traverse the membrane as a helical segment. Topologically, residues 368–370 (QVD) are cytoplasmic. The helical transmembrane segment at 371-388 (GNQELIALGICNSIGSLF) threads the bilayer. Residues 389–396 (QTFSISCS) lie on the Extracellular side of the membrane. The helical transmembrane segment at 397-406 (LSRSLVQEGT) threads the bilayer. Ser398 is a binding site for salicylate. Topologically, residues 407–410 (GGKT) are cytoplasmic. Residues 411–432 (QLAGCLASLMILLVILATGFLF) traverse the membrane as a helical segment. The Extracellular portion of the chain corresponds to 433–436 (ESLP). Residues 437–464 (QAVLSAIVIVNLKGMFMQFSDLPFFWRT) traverse the membrane as a helical segment. Residue Ser465 is a topological domain, cytoplasmic. The helical transmembrane segment at 466 to 481 (KIELTIWLTTFVSSLF) threads the bilayer. Residues 482 to 483 (LG) lie on the Extracellular side of the membrane. The helical transmembrane segment at 484–504 (LDYGLITAVIIALLTVIYRTQ) threads the bilayer. Residues 505–718 (SPSYKVLGQL…AVLGSQVREA (214 aa)) form an extended region for STAS domain region. Residues 505 to 744 (SPSYKVLGQL…PNATPTTPEA (240 aa)) lie on the Cytoplasmic side of the membrane. An STAS domain is found at 525–713 (AYEEVKEIPG…HSIHDAVLGS (189 aa)). Residues 720-744 (AEQEATASLPQEDMEPNATPTTPEA) are disordered.

It belongs to the SLC26A/SulP transporter (TC 2.A.53) family. Homodimer. Interacts (via STAS domain) with CALM; this interaction is calcium-dependent and the STAS domain interacts with only one lobe of CALM which is an elongated conformation. Interacts with MYH1. In terms of tissue distribution, expressed in the outer hair cells (OHC) of the organ of Corti of the inner ear. Also weak expression in brain and testis. Very weakly expressed in heart, spleen, muscle and lactating mammary glands. Expressed in cardiac myocytes (at protein level), both in the surface sarcolemma and along the t-tubule. Weakly expressed in skeletal muscle cells (at protein level).

It is found in the lateral cell membrane. The enzyme catalyses 2 hydrogencarbonate(in) + chloride(out) = 2 hydrogencarbonate(out) + chloride(in). Functionally, voltage-sensitive motor protein that drives outer hair cell (OHC) electromotility (eM) and participates in sound amplification in the hearing organ. Converts changes in the transmembrane electric potential into mechanical displacements resulting in the coupling of its expansion to movement of a charged voltage sensor across the lipid membrane. The nature of the voltage sensor is not completely clear, and two models compete. In the first model, acts as an incomplete transporter where intracellular chloride anion acts as extrinsic voltage sensor that drives conformational change in the protein which is sufficient to produce a length change in the plane of the membrane and hence in the length of the OHC. The second model in which multiple charged amino acid residues are distributed at the intracellular and extracellular membrane interfaces that form an intrinsic voltage sensor, whose movement produces the non-linear capacitance (NLC). However, the effective voltage sensor may be the result of a hybrid voltage sensor, assembled from intrinsic charge (charged residues) and extrinsic charge (bound anion). Notably, binding of anions to the anion-binding pocket partially neutralizes the intrinsic positive charge rather than to form an electrically negative sensor, therefore remaining charge may serve as voltage sensor that, after depolarization, moves from down (expanded state) to up (contracted) conformation, which is accompanied by an eccentric contraction of the intermembrane cross-sectional area of the protein as well as a major increase in the hydrophobic thickness of the protein having as consequences the plasma membrane thickening and the cell contraction after membrane depolarization. The anion-binding pocket transits from the inward-open (Down) state, where it is exposed toward the intracellular solvent in the absence of anion, to the occluded (Up) state upon anion binding. Salicylate competes for the anion-binding site and inhibits the voltage-sensor movement, and therefore inhibits the charge transfer and electromotility by displacing Cl(-) from the anion-binding site and by preventing the structural transitions to the contracted state. In addition, can act as a weak Cl(-)/HCO3(-) antiporter across the cell membrane and so regulate the intracellular pH of the outer hair cells (OHCs), while firstly found as being unable to mediate electrogenic anion transport. Moreover, supports a role in cardiac mechanical amplification serving as an elastic element to enhance the actomyosin- based sarcomere contraction system. This chain is Prestin, found in Mus musculus (Mouse).